Consider the following 349-residue polypeptide: NADP-dependent alcohol dehydrogenase C 1 (349 aa).

The Zn(2+) site is built by Cys-41, His-63, Cys-94, Cys-97, Cys-100, Cys-108, and Cys-159. An Isoglutamyl lysine isopeptide (Lys-Gln) (interchain with Q-Cter in protein Pup) cross-link involves residue Lys-210.

The protein belongs to the zinc-containing alcohol dehydrogenase family. Requires Zn(2+) as cofactor.

The enzyme catalyses a primary alcohol + NADP(+) = an aldehyde + NADPH + H(+). Prefers aldehydes over alcohols. This chain is NADP-dependent alcohol dehydrogenase C 1 (adhc1), found in Mycolicibacterium smegmatis (strain ATCC 700084 / mc(2)155) (Mycobacterium smegmatis).